A 170-amino-acid chain; its full sequence is Myelin-associated oligodendrocyte basic protein (170 aa).

Residues 69 to 170 (SRRATSPQRP…GSPTRAPRFW (102 aa)) are disordered. The span at 82 to 92 (PAASPVVVRAP) shows a compositional bias: low complexity. A phosphoserine mark is found at Ser85, Ser98, and Ser107. 2 consecutive repeat copies span residues 93-101 (PAKPKSPLM) and 105-110 (PRSPPR). A 3 X 9 AA approximate tandem repeats region spans residues 93 to 115 (PAKPKSPLMPAKPRSPPRPAKPR). The stretch at 111–115 (PAKPR) is one 3; half-length repeat. The span at 118–130 (SRTERQPRPRPEV) shows a compositional bias: basic and acidic residues. A compositionally biased stretch (low complexity) spans 138–151 (KPPQKSKQPARSSP).

The protein resides in the cytoplasm. It is found in the perinuclear region. May play a role in compacting or stabilizing the myelin sheath possibly by binding the negatively charged acidic phospholipids of the cytoplasmic membrane. The polypeptide is Myelin-associated oligodendrocyte basic protein (Mobp) (Mus musculus (Mouse)).